We begin with the raw amino-acid sequence, 339 residues long: Tetraacyldisaccharide 4'-kinase (339 aa).

ATP is bound at residue 44-51; it reads TVGGTGKT.

It belongs to the LpxK family.

The catalysed reaction is a lipid A disaccharide + ATP = a lipid IVA + ADP + H(+). It functions in the pathway glycolipid biosynthesis; lipid IV(A) biosynthesis; lipid IV(A) from (3R)-3-hydroxytetradecanoyl-[acyl-carrier-protein] and UDP-N-acetyl-alpha-D-glucosamine: step 6/6. Functionally, transfers the gamma-phosphate of ATP to the 4'-position of a tetraacyldisaccharide 1-phosphate intermediate (termed DS-1-P) to form tetraacyldisaccharide 1,4'-bis-phosphate (lipid IVA). The protein is Tetraacyldisaccharide 4'-kinase of Bdellovibrio bacteriovorus (strain ATCC 15356 / DSM 50701 / NCIMB 9529 / HD100).